Reading from the N-terminus, the 287-residue chain is Bifunctional protein FolD (287 aa).

NADP(+)-binding positions include 166 to 168 (GAS) and Ile-232.

Belongs to the tetrahydrofolate dehydrogenase/cyclohydrolase family. Homodimer.

The enzyme catalyses (6R)-5,10-methylene-5,6,7,8-tetrahydrofolate + NADP(+) = (6R)-5,10-methenyltetrahydrofolate + NADPH. It carries out the reaction (6R)-5,10-methenyltetrahydrofolate + H2O = (6R)-10-formyltetrahydrofolate + H(+). Its pathway is one-carbon metabolism; tetrahydrofolate interconversion. Catalyzes the oxidation of 5,10-methylenetetrahydrofolate to 5,10-methenyltetrahydrofolate and then the hydrolysis of 5,10-methenyltetrahydrofolate to 10-formyltetrahydrofolate. The sequence is that of Bifunctional protein FolD from Buchnera aphidicola subsp. Baizongia pistaciae (strain Bp).